Here is a 398-residue protein sequence, read N- to C-terminus: Small ribosomal subunit protein mS29 (398 aa).

A mitochondrion-targeting transit peptide spans 1-21 (MMLKGITRLISRIHKLDPGRF). Residues 39-67 (QVPVESPRAISRTNENDPAKHGDQHEGQH) are disordered. Basic and acidic residues predominate over residues 52–66 (NENDPAKHGDQHEGQ). GTP-binding positions include M100 and 128 to 135 (GEKGTGKT). N6-acetyllysine occurs at positions 175 and 207.

It belongs to the mitochondrion-specific ribosomal protein mS29 family. In terms of assembly, component of the mitochondrial small ribosomal subunit (mt-SSU). Mature mammalian 55S mitochondrial ribosomes consist of a small (28S) and a large (39S) subunit. The 28S small subunit contains a 12S ribosomal RNA (12S mt-rRNA) and 30 different proteins. The 39S large subunit contains a 16S rRNA (16S mt-rRNA), a copy of mitochondrial valine transfer RNA (mt-tRNA(Val)), which plays an integral structural role, and 52 different proteins. Interacts with DELE1. Interacts with NOA1. Ubiquitous.

Its subcellular location is the mitochondrion. The enzyme catalyses GTP + H2O = GDP + phosphate + H(+). Functionally, as a component of the mitochondrial small ribosomal subunit, it plays a role in the translation of mitochondrial mRNAs. Involved in mediating interferon-gamma-induced cell death. Displays GTPase activity in vitro. The polypeptide is Small ribosomal subunit protein mS29 (Homo sapiens (Human)).